Consider the following 566-residue polypeptide: Ubiquitin carboxyl-terminal hydrolase 21 (566 aa).

2 stretches are compositionally biased toward basic and acidic residues: residues 1–14 (MPQA…RTRE) and 58–70 (PPDE…ELGR). 2 disordered regions span residues 1–103 (MPQA…LPLP) and 146–169 (PEPP…PPTL). 2 stretches are compositionally biased toward low complexity: residues 71-81 (GRTSGSRPRGP) and 151-160 (LRRSTSLRRL). The Nuclear export signal motif lies at 134 to 152 (ELGAALSRLALRPEPPTLR). Residues 212-559 (VGLRNLGNTC…EGYVLFYQLM (348 aa)) form the USP domain. Catalysis depends on Cys-221, which acts as the Nucleophile. Residues 324–349 (APPILASGPVPSPPRRGGGALHEEPE) are disordered. Residues Cys-385, Cys-388, Cys-438, and Cys-441 each contribute to the Zn(2+) site. Residue His-519 is the Proton acceptor of the active site.

Belongs to the peptidase C19 family. USP21 subfamily. Interacts with BEND3.

Its subcellular location is the cytoplasm. It localises to the nucleus. The catalysed reaction is Thiol-dependent hydrolysis of ester, thioester, amide, peptide and isopeptide bonds formed by the C-terminal Gly of ubiquitin (a 76-residue protein attached to proteins as an intracellular targeting signal).. Its function is as follows. Deubiquitinates histone H2A, a specific tag for epigenetic transcriptional repression, thereby acting as a coactivator. Deubiquitination of histone H2A releaves the repression of di- and trimethylation of histone H3 at 'Lys-4', resulting in regulation of transcriptional initiation. Regulates gene expression via histone H2A deubiquitination. Deubiquitinates BAZ2A/TIP5 leading to its stabilization. Also capable of removing NEDD8 from NEDD8 conjugates but has no effect on Sentrin-1 conjugates. Also acts as a negative regulator of the ribosome quality control (RQC) by mediating deubiquitination of 40S ribosomal proteins RPS10/eS10 and RPS20/uS10, thereby antagonizing ZNF598-mediated 40S ubiquitination. This chain is Ubiquitin carboxyl-terminal hydrolase 21, found in Mus musculus (Mouse).